Reading from the N-terminus, the 180-residue chain is Large ribosomal subunit protein uL6 (180 aa).

This sequence belongs to the universal ribosomal protein uL6 family. Part of the 50S ribosomal subunit.

Its function is as follows. This protein binds to the 23S rRNA, and is important in its secondary structure. It is located near the subunit interface in the base of the L7/L12 stalk, and near the tRNA binding site of the peptidyltransferase center. This chain is Large ribosomal subunit protein uL6, found in Anaeromyxobacter dehalogenans (strain 2CP-C).